A 61-amino-acid polypeptide reads, in one-letter code: Statherin (61 aa).

The N-terminal stretch at 1–19 (MXFLXFXLXLLXMXXMXXX) is a signal peptide. The interval 20-25 (DSSEEK) is hydroxyapatite-binding; inhibits crystal growth. Residues Ser-21 and Ser-22 each carry the phosphoserine modification. A disordered region spans residues 37–61 (RYGPYQPFAPQPLYPQPYQPYQPQY). A hydrophobic; inhibits precipitation of calcium phosphate salts region spans residues 37–61 (RYGPYQPFAPQPLYPQPYQPYQPQY). The segment covering 43-61 (PFAPQPLYPQPYQPYQPQY) has biased composition (pro residues).

This sequence belongs to the histatin/statherin family. As to expression, secreted by parotid and submandibular glands.

It localises to the secreted. In terms of biological role, salivary protein that stabilizes saliva supersaturated with calcium salts by inhibiting the precipitation of calcium phosphate salts. It also modulates hydroxyapatite crystal formation on the tooth surface. The sequence is that of Statherin (STATH) from Macaca fascicularis (Crab-eating macaque).